Reading from the N-terminus, the 210-residue chain is MSNEDFILNAEARDVSGKGASRRLRREAGLVPAIVYGGRKNPQNVTITLRELTKHLENEAFYSHIITLNIGDSSEQVILKDLQRHPATNFAMHADFLRVSKTKKFNTKVPLHFINEATSKGVKEQGGKVQHSMTELEIACLPADLPEFIEVDLANVELGGIVHISDIVLPKGVESIALQQGEDHDLPVASIFKPKGVAGDEDEEAEGDAE.

Belongs to the bacterial ribosomal protein bL25 family. CTC subfamily. In terms of assembly, part of the 50S ribosomal subunit; part of the 5S rRNA/L5/L18/L25 subcomplex. Contacts the 5S rRNA. Binds to the 5S rRNA independently of L5 and L18.

Its function is as follows. This is one of the proteins that binds to the 5S RNA in the ribosome where it forms part of the central protuberance. The sequence is that of Large ribosomal subunit protein bL25 from Saccharophagus degradans (strain 2-40 / ATCC 43961 / DSM 17024).